A 737-amino-acid polypeptide reads, in one-letter code: Disintegrin and metalloproteinase domain-containing protein 2 (737 aa).

The N-terminal stretch at 1–18 (MWLLLLLLSGLSRLGGLS) is a signal peptide. A propeptide spanning residues 19–180 (EPQTEGTREK…YKIRSIKPQR (162 aa)) is cleaved from the precursor. The Extracellular segment spans residues 19–688 (EPQTEGTREK…ASAYRSKSAR (670 aa)). N-linked (GlcNAc...) asparagine glycans are attached at residues Asn128 and Asn226. The Peptidase M12B domain occupies 184–381 (HYLEIHIVVE…QSSHCLQNQP (198 aa)). 4 disulfides stabilise this stretch: Cys293-Cys376, Cys335-Cys360, Cys337-Cys342, and Cys450-Cys470. N-linked (GlcNAc...) asparagine glycans are attached at residues Asn359, Asn464, Asn491, and Asn571. One can recognise a Disintegrin domain in the interval 389–478 (MAVCGNGELE…VCEEDFFVQD (90 aa)). In terms of domain architecture, EGF-like spans 617 to 650 (LNYDCTPEKCNHHGVCNNKKHCHCEPTYLPPDCK). Cystine bridges form between Cys621–Cys632, Cys626–Cys638, and Cys640–Cys649. Residues 689 to 709 (WPFFLIIPFYVVILVLIGMLV) form a helical membrane-spanning segment. The Cytoplasmic portion of the chain corresponds to 710–737 (KVYSQRKKWRMDDFSSEEQFESESESKD). Ser731 is modified (phosphoserine).

As to quaternary structure, heterodimer with ADAM1/fertilin subunit alpha. In terms of processing, the prodomain and the metalloprotease domain are cleaved during the epididymal maturation of the spermatozoa.

It localises to the membrane. Functionally, sperm surface membrane protein that may be involved in sperm-egg plasma membrane adhesion and fusion during fertilization. Could have a direct role in sperm-zona binding or migration of sperm from the uterus into the oviduct. Interactions with egg membrane could be mediated via binding between its disintegrin-like domain to one or more integrins receptors on the egg. This is a non catalytic metalloprotease-like protein. This chain is Disintegrin and metalloproteinase domain-containing protein 2 (Adam2), found in Rattus norvegicus (Rat).